The sequence spans 459 residues: ATP synthase subunit beta (459 aa).

148-155 (GGAGVGKT) provides a ligand contact to ATP.

This sequence belongs to the ATPase alpha/beta chains family. In terms of assembly, F-type ATPases have 2 components, CF(1) - the catalytic core - and CF(0) - the membrane proton channel. CF(1) has five subunits: alpha(3), beta(3), gamma(1), delta(1), epsilon(1). CF(0) has three main subunits: a(1), b(2) and c(9-12). The alpha and beta chains form an alternating ring which encloses part of the gamma chain. CF(1) is attached to CF(0) by a central stalk formed by the gamma and epsilon chains, while a peripheral stalk is formed by the delta and b chains.

The protein resides in the cell inner membrane. The catalysed reaction is ATP + H2O + 4 H(+)(in) = ADP + phosphate + 5 H(+)(out). Produces ATP from ADP in the presence of a proton gradient across the membrane. The catalytic sites are hosted primarily by the beta subunits. This is ATP synthase subunit beta from Burkholderia mallei (strain NCTC 10229).